A 465-amino-acid chain; its full sequence is VGFKAGVKDYKLTYYTPDYVTKDTDILAAFRVTPQPGVPPEEAGAAVAAESSTGTWTTVWTDGLTSLDRYKGRCYNIEPVAGEENQYICYVAYPLDLFEEGSVTNMFTSIVGNVFGFKALRALRLEDLRIPPAYSKTFQGPPHGIQVERDKLNKYGRPLLGCTIKPKLGLSAKNYGRAVYECLRGGLDFTKDDENVNSQPFMRWRDRFLFCAEAIFKSQAETGEIKGHYLNATAGTCEEMIKRAVFARELGAPIVMHDYLTGGFTANTSLAHYCRDNGLLLHIHRAMHAVIDRQKNHGMHFRVLAKALRLSGGDHIHAGTVVGKLEGERDITLGFVDLLRDDFVEKDRSRGIYFTQDWVSLPGVLPVASGGIHVWHMPALTEIFGDDSVLQFGGGTLGHPWGNAPGAVANRVALEACVQARNEGRDLAREGNDIIRDASKWSPELAAACEVWKEIKFEFEAMDTL.

Lysine 4 carries the post-translational modification N6,N6,N6-trimethyllysine. 2 residues coordinate substrate: asparagine 113 and threonine 163. Lysine 165 (proton acceptor) is an active-site residue. A substrate-binding site is contributed by lysine 167. Lysine 191, aspartate 193, and glutamate 194 together coordinate Mg(2+). Lysine 191 is modified (N6-carboxylysine). The active-site Proton acceptor is histidine 284. Residues arginine 285, histidine 317, and serine 369 each coordinate substrate.

It belongs to the RuBisCO large chain family. Type I subfamily. Heterohexadecamer of 8 large chains and 8 small chains; disulfide-linked. The disulfide link is formed within the large subunit homodimers. Mg(2+) is required as a cofactor. In terms of processing, the disulfide bond which can form in the large chain dimeric partners within the hexadecamer appears to be associated with oxidative stress and protein turnover.

The protein resides in the plastid. It is found in the chloroplast. The catalysed reaction is 2 (2R)-3-phosphoglycerate + 2 H(+) = D-ribulose 1,5-bisphosphate + CO2 + H2O. The enzyme catalyses D-ribulose 1,5-bisphosphate + O2 = 2-phosphoglycolate + (2R)-3-phosphoglycerate + 2 H(+). RuBisCO catalyzes two reactions: the carboxylation of D-ribulose 1,5-bisphosphate, the primary event in carbon dioxide fixation, as well as the oxidative fragmentation of the pentose substrate in the photorespiration process. Both reactions occur simultaneously and in competition at the same active site. In Bursera inaguensis (Elaphrium inaguense), this protein is Ribulose bisphosphate carboxylase large chain.